Reading from the N-terminus, the 485-residue chain is E3 ubiquitin-protein ligase TRIM68 (485 aa).

Residues 16–61 (CPICMTFLREPMSIDCGHSFCHSCLSGLWEIPGESQNWGYTCPLCR) form an RING-type zinc finger. The B box-type zinc-finger motif lies at 93 to 134 (LKGDLCERHGEKLKMFCKEDVLIMCEACSQSPEHEAHSVVPM). Zn(2+) is bound by residues Cys-98, His-101, Cys-120, and His-126. Residues 207–239 (AEVAAALASLQREAAETMQKLELNHSELIQQSQ) are a coiled coil. Residues 285–481 (LKTDCRVLGL…NTAPLAICSL (197 aa)) form the B30.2/SPRY domain.

It belongs to the TRIM/RBCC family. Interacts with AR/androgen receptor (via ligand-binding domain). Interacts with KAT5/TIP60. Auto-ubiquitinated. In terms of tissue distribution, widely expressed. Expressed at high levels in prostate cancer cell lines. Up-regulation could be restricted to androgen-dependent cells.

The protein resides in the cytoplasm. It is found in the perinuclear region. It localises to the nucleus. It carries out the reaction S-ubiquitinyl-[E2 ubiquitin-conjugating enzyme]-L-cysteine + [acceptor protein]-L-lysine = [E2 ubiquitin-conjugating enzyme]-L-cysteine + N(6)-ubiquitinyl-[acceptor protein]-L-lysine.. It participates in protein modification; protein ubiquitination. In terms of biological role, functions as a ubiquitin E3 ligase. Acts as a coactivator of androgen receptor (AR) depending on its ubiquitin ligase activity. The sequence is that of E3 ubiquitin-protein ligase TRIM68 (TRIM68) from Homo sapiens (Human).